Here is a 1854-residue protein sequence, read N- to C-terminus: Immunoglobulin A1 protease (1854 aa).

A signal peptide spans 1 to 37; that stretch reads MKKFLGEKQTRFAFRKLAVGLVSAAISSLFFVSIVGV. A propeptide spanning residues 38 to 99 is cleaved from the precursor; that stretch reads DSVQAQEKLN…NAGAKTLPNT (62 aa). Positions 96 to 100 match the LPXTG sorting signal motif; sequence LPNTG. Position 99 is a pentaglycyl murein peptidoglycan amidated threonine (threonine 99). 2 consecutive transmembrane segments (helical) span residues 106–125 and 132–154; these read TMMA…FAVS and KFLL…VDAL. Residues 155–1854 are Extracellular-facing; it reads ENGSLLQYNA…FRKSIFENQK (1700 aa). Residues 256–335 form the G5 domain; it reads KPELLYKETS…PKIVEKGTKK (80 aa). 10 consecutive repeat copies span residues 349–368, 369–388, 389–406, 407–426, 427–446, 447–466, 467–486, 487–506, 507–526, and 527–546. The interval 349 to 546 is 10 X 20 AA approximate tandem repeats; it reads VQPEQVAPLP…EYTGNIEPAA (198 aa). The span at 533–550 shows a compositional bias: low complexity; the sequence is EPPQEYTGNIEPAAPEAE. Residues 533 to 570 form a disordered region; it reads EPPQEYTGNIEPAAPEAENPTEKAQEPKEQKQEPEKNI. Over residues 552–570 the composition is skewed to basic and acidic residues; it reads PTEKAQEPKEQKQEPEKNI. Histidine 1494 is a binding site for Zn(2+). Residue glutamate 1495 is part of the active site. The Zn(2+) site is built by histidine 1498 and glutamate 1518.

The protein belongs to the peptidase M26 family. It depends on Zn(2+) as a cofactor. The Gram-positive cell-wall anchor motif LPXTG is located in the N-terminal part, in contrast to such motifs in other known streptococcal and staphylococcal proteins. The protease could be cleaved by the sortase and anchored in the membrane via the two potential N-terminal transmembrane domains, whereas the propeptide located prior to the LPXTG motif would remain attached to the cell wall peptidoglycan by an amide bond.

Its subcellular location is the secreted. It is found in the cell wall. It localises to the membrane. The enzyme catalyses Cleavage of Pro-|-Thr bond in the hinge region of the heavy chain of human IgA.. Its activity is regulated as follows. Inhibited by EDTA. Functionally, zinc metalloproteinase which cleaves human immunoglobulin A1 (IgA1) in the hinge region. The chain is Immunoglobulin A1 protease (iga) from Streptococcus sanguinis.